The primary structure comprises 592 residues: Inactive metallocarboxypeptidase ECM14 (592 aa).

The signal sequence occupies residues 1–21; it reads MRQFTHGTLLAILALANTISA. A propeptide spanning residues 22-174 is cleaved from the precursor; sequence IPSFSANNYP…QTVYESYPSS (153 aa). Polar residues predominate over residues 170–179; the sequence is SYPSSSQRPT. The segment at 170–191 is disordered; the sequence is SYPSSSQRPTDNGRGFLPSRES. Residues 202 to 521 enclose the Peptidase M14 domain; the sequence is DYQPLSVIGP…NAVMVLGKFL (320 aa). Zn(2+)-binding residues include His264 and Glu267. Substrate-binding positions include 264-267, Arg322, and 339-340; these read HARE and DR. A disulfide bond links Cys333 and Cys356. An N-linked (GlcNAc...) asparagine glycan is attached at Asn349. Residue His396 coordinates Zn(2+). 397 to 398 provides a ligand contact to substrate; that stretch reads SY. Residues 542 to 592 are disordered; the sequence is ADKPILDDGDDDEEEDGQDKNDDSWIPDEYKNDNDHDDDDDGWGLRRRRKR. Residues 548–558 are compositionally biased toward acidic residues; sequence DDGDDDEEEDG. Residues 559-575 are compositionally biased toward basic and acidic residues; that stretch reads QDKNDDSWIPDEYKNDN.

Belongs to the peptidase M14 family. Zn(2+) is required as a cofactor.

The protein resides in the vacuole. It localises to the secreted. Its function is as follows. Inactive carboxypeptidase that may play a role in cell wall organization and biogenesis. In Blastomyces gilchristii (strain SLH14081) (Blastomyces dermatitidis), this protein is Inactive metallocarboxypeptidase ECM14 (ECM14).